The chain runs to 154 residues: UPF0260 protein NTHI1811 (154 aa).

Belongs to the UPF0260 family.

The chain is UPF0260 protein NTHI1811 from Haemophilus influenzae (strain 86-028NP).